Consider the following 452-residue polypeptide: Keratin, type I cytoskeletal 15 (452 aa).

The segment at 1–97 (MATTFLQTSS…GGDGGLLSGN (97 aa)) is head. S15, S16, S28, S33, and S47 each carry phosphoserine. A coil 1A region spans residues 98–133 (EKVTMQNLNDRLASYLDKVRALEQANTELEVKIRDW). Residues 98–410 (EKVTMQNLND…NLLEGQDAKM (313 aa)) form the IF rod domain. At T124 the chain carries Phosphothreonine. The interval 134–152 (YQKQSPASPDRDYSHYFKT) is linker 1. Residues 153 to 244 (MEEIRDKILA…KNHEEEMKEF (92 aa)) form a coil 1B region. The segment at 245–264 (SSQLAGQVNVEMDAAPGVDL) is linker 12. The segment at 265–406 (TRMLAEMREQ…ATYRNLLEGQ (142 aa)) is coil 2. K293 is covalently cross-linked (Glycyl lysine isopeptide (Lys-Gly) (interchain with G-Cter in SUMO2)). 2 positions are modified to phosphothreonine: T294 and T316. The tail stretch occupies residues 407-452 (DAKMAGIGVREGSSGGGGSSSSSSNFHISVEESVDGKVVSSRKREI). The segment at 413–452 (IGVREGSSGGGGSSSSSSNFHISVEESVDGKVVSSRKREI) is disordered. K443 is covalently cross-linked (Glycyl lysine isopeptide (Lys-Gly) (interchain with G-Cter in SUMO1); alternate). A Glycyl lysine isopeptide (Lys-Gly) (interchain with G-Cter in SUMO2); alternate cross-link involves residue K443.

Belongs to the intermediate filament family. In terms of assembly, heterotetramer of two type I and two type II keratins. Forms a heterodimer with KRT14. Interacts with PLEC isoform 1C, when in a heterodimer with KRT14. Interacts with NOD2. Expressed strongly in the basal cell layer at the tips of rete-like prominences (RLPs) of adult dorsal tongue, outer root sheath (ORS) of hair follicle and skin epidermis (at protein level).

In terms of biological role, in the absence of KRT14, makes a bona fide, but ultrastructurally distinct keratin filament network with KRT5. The protein is Keratin, type I cytoskeletal 15 (Krt15) of Mus musculus (Mouse).